Here is a 576-residue protein sequence, read N- to C-terminus: Arginine--tRNA ligase (576 aa).

The short motif at 122–132 (PNVAKEMHVGH) is the 'HIGH' region element.

It belongs to the class-I aminoacyl-tRNA synthetase family. In terms of assembly, monomer.

It localises to the cytoplasm. The enzyme catalyses tRNA(Arg) + L-arginine + ATP = L-arginyl-tRNA(Arg) + AMP + diphosphate. The protein is Arginine--tRNA ligase of Erwinia tasmaniensis (strain DSM 17950 / CFBP 7177 / CIP 109463 / NCPPB 4357 / Et1/99).